The chain runs to 204 residues: Kunitz type trypsin inhibitor 106 (204 aa).

An N-terminal signal peptide occupies residues 1-26; the sequence is MSMRLSIRTLIILAHVCLFITTTTIA. Asparagine 62 carries N-linked (GlcNAc...) asparagine glycosylation. The cysteines at positions 65 and 112 are disulfide-linked. N-linked (GlcNAc...) asparagine glycosylation occurs at asparagine 141. Intrachain disulfides connect cysteine 164/cysteine 176 and cysteine 169/cysteine 172.

The protein belongs to the protease inhibitor I3 (leguminous Kunitz-type inhibitor) family. In terms of assembly, interacts with SCP1 and CP. As to expression, expressed at low levels in non-mycorrhizal roots.

Its subcellular location is the secreted. The protein localises to the extracellular space. It is found in the apoplast. In terms of biological role, protease inhibitor that, together with SCP1, controls mycorrhiza establishment and arbuscule development during root colonization by arbuscular mycorrhizal (AM) fungi (e.g. Rhizophagus irregularis), probably by degrading SCP1 in the apoplast of the periarbuscular region. This chain is Kunitz type trypsin inhibitor 106, found in Medicago truncatula (Barrel medic).